We begin with the raw amino-acid sequence, 333 residues long: Electron transfer flavoprotein subunit alpha, mitochondrial (333 aa).

A mitochondrion-targeting transit peptide spans 1–19 (MFRAAAPGQLRRAASLLRF). The tract at residues 20–204 (QSTLVIAEHA…GISEWLDQKL (185 aa)) is domain I. K59 carries the N6-acetyllysine; alternate modification. K59 carries the N6-succinyllysine; alternate modification. N6-acetyllysine is present on K62. K69 bears the N6-acetyllysine; alternate mark. Residue K69 is modified to N6-succinyllysine; alternate. K75 carries the post-translational modification N6-acetyllysine. An N6-acetyllysine; alternate modification is found at K85. The residue at position 85 (K85) is an N6-succinyllysine; alternate. T93 carries the phosphothreonine modification. N6-acetyllysine is present on residues K101 and K139. Position 140 is a phosphoserine (S140). N6-acetyllysine; alternate is present on K158. An N6-succinyllysine; alternate modification is found at K158. K164 bears the N6-acetyllysine mark. At K187 the chain carries N6-succinyllysine. K203 is subject to N6-acetyllysine; alternate. K203 carries the N6-succinyllysine; alternate modification. The domain II stretch occupies residues 205 to 333 (TKSDRPELTG…PEMTEILKKK (129 aa)). K216 carries the post-translational modification N6-succinyllysine. Residue R223 coordinates FAD. Residues K226 and K232 each carry the N6-acetyllysine; alternate modification. K226 and K232 each carry N6-succinyllysine; alternate. FAD contacts are provided by residues S248, 263–266 (VGQT), 281–286 (SGAIQH), and N300. K301 is subject to N6-succinyllysine. 318–319 (DL) serves as a coordination point for FAD.

This sequence belongs to the ETF alpha-subunit/FixB family. As to quaternary structure, heterodimer composed of ETFA and ETFB. Identified in a complex that contains ETFA, ETFB and ETFRF1. Interaction with ETFRF1 promotes dissociation of the bound FAD and loss of electron transfer activity. Interacts with TASOR. The cofactor is FAD. Expressed in the spermatogonia, spermatocytes, ovary and granular cells within the cerebellum.

It localises to the mitochondrion matrix. In terms of biological role, heterodimeric electron transfer flavoprotein that accepts electrons from several mitochondrial dehydrogenases, including acyl-CoA dehydrogenases, glutaryl-CoA and sarcosine dehydrogenase. It transfers the electrons to the main mitochondrial respiratory chain via ETF-ubiquinone oxidoreductase (ETF dehydrogenase). Required for normal mitochondrial fatty acid oxidation and normal amino acid metabolism. This Mus musculus (Mouse) protein is Electron transfer flavoprotein subunit alpha, mitochondrial (Etfa).